The following is a 160-amino-acid chain: Cytochrome b6-f complex subunit 4 (160 aa).

3 helical membrane passes run 36–56, 95–115, and 131–151; these read LLYIFPVVILGTIACNVGLAV, LLGVLLMVSVPAGLLTVPFLE, and TVFLIGTAAALWLGIGATLPI.

This sequence belongs to the cytochrome b family. PetD subfamily. The 4 large subunits of the cytochrome b6-f complex are cytochrome b6, subunit IV (17 kDa polypeptide, petD), cytochrome f and the Rieske protein, while the 4 small subunits are petG, petL, petM and petN. The complex functions as a dimer.

The protein localises to the plastid. Its subcellular location is the chloroplast thylakoid membrane. In terms of biological role, component of the cytochrome b6-f complex, which mediates electron transfer between photosystem II (PSII) and photosystem I (PSI), cyclic electron flow around PSI, and state transitions. This is Cytochrome b6-f complex subunit 4 from Arabidopsis thaliana (Mouse-ear cress).